A 363-amino-acid polypeptide reads, in one-letter code: Histidinol-phosphate aminotransferase (363 aa).

K218 carries the post-translational modification N6-(pyridoxal phosphate)lysine.

Belongs to the class-II pyridoxal-phosphate-dependent aminotransferase family. Histidinol-phosphate aminotransferase subfamily. As to quaternary structure, homodimer. It depends on pyridoxal 5'-phosphate as a cofactor.

It catalyses the reaction L-histidinol phosphate + 2-oxoglutarate = 3-(imidazol-4-yl)-2-oxopropyl phosphate + L-glutamate. It functions in the pathway amino-acid biosynthesis; L-histidine biosynthesis; L-histidine from 5-phospho-alpha-D-ribose 1-diphosphate: step 7/9. The protein is Histidinol-phosphate aminotransferase of Xanthomonas axonopodis pv. citri (strain 306).